The sequence spans 263 residues: Putative replication protein PDa0002 (263 aa).

The chain is Putative replication protein PDa0002 from Xylella fastidiosa (strain Temecula1 / ATCC 700964).